The chain runs to 129 residues: Glycine cleavage system H protein (129 aa).

A Lipoyl-binding domain is found at 24 to 106; the sequence is LVRVGISAFA…HGEGWLLVLR (83 aa). The residue at position 65 (K65) is an N6-lipoyllysine.

It belongs to the GcvH family. The glycine cleavage system is composed of four proteins: P, T, L and H. It depends on (R)-lipoate as a cofactor.

In terms of biological role, the glycine cleavage system catalyzes the degradation of glycine. The H protein shuttles the methylamine group of glycine from the P protein to the T protein. The chain is Glycine cleavage system H protein from Synechococcus sp. (strain CC9605).